The sequence spans 221 residues: Endonuclease V (221 aa).

Mg(2+) contacts are provided by Asp44 and Asp112.

It belongs to the endonuclease V family. The cofactor is Mg(2+).

Its subcellular location is the cytoplasm. The enzyme catalyses Endonucleolytic cleavage at apurinic or apyrimidinic sites to products with a 5'-phosphate.. DNA repair enzyme involved in the repair of deaminated bases. Selectively cleaves double-stranded DNA at the second phosphodiester bond 3' to a deoxyinosine leaving behind the intact lesion on the nicked DNA. The sequence is that of Endonuclease V from Trichormus variabilis (strain ATCC 29413 / PCC 7937) (Anabaena variabilis).